The following is a 281-amino-acid chain: Ribosomal protein L11 methyltransferase (281 aa).

4 residues coordinate S-adenosyl-L-methionine: threonine 133, glycine 154, aspartate 175, and asparagine 216.

It belongs to the methyltransferase superfamily. PrmA family.

The protein localises to the cytoplasm. It catalyses the reaction L-lysyl-[protein] + 3 S-adenosyl-L-methionine = N(6),N(6),N(6)-trimethyl-L-lysyl-[protein] + 3 S-adenosyl-L-homocysteine + 3 H(+). Functionally, methylates ribosomal protein L11. This chain is Ribosomal protein L11 methyltransferase, found in Campylobacter jejuni subsp. jejuni serotype O:2 (strain ATCC 700819 / NCTC 11168).